Consider the following 1070-residue polypeptide: uncharacterized protein (1070 aa).

Residues 477 to 523 (LIDTNQLLLRQLQQIVKLGIFNEKKIKEELKANKFNEQVALQILESE) form the UBA domain.

This is an uncharacterized protein from Sulfolobus islandicus rod-shaped virus 1 (SIRV-1).